The following is a 362-amino-acid chain: Chorismate synthase (362 aa).

NADP(+)-binding residues include arginine 48 and arginine 54. Residues 125 to 127, 238 to 239, glycine 286, 301 to 305, and arginine 327 contribute to the FMN site; these read RSS, NA, and KPTSS.

Belongs to the chorismate synthase family. In terms of assembly, homotetramer. The cofactor is FMNH2.

The enzyme catalyses 5-O-(1-carboxyvinyl)-3-phosphoshikimate = chorismate + phosphate. It participates in metabolic intermediate biosynthesis; chorismate biosynthesis; chorismate from D-erythrose 4-phosphate and phosphoenolpyruvate: step 7/7. Its function is as follows. Catalyzes the anti-1,4-elimination of the C-3 phosphate and the C-6 proR hydrogen from 5-enolpyruvylshikimate-3-phosphate (EPSP) to yield chorismate, which is the branch point compound that serves as the starting substrate for the three terminal pathways of aromatic amino acid biosynthesis. This reaction introduces a second double bond into the aromatic ring system. In Granulibacter bethesdensis (strain ATCC BAA-1260 / CGDNIH1), this protein is Chorismate synthase.